A 574-amino-acid chain; its full sequence is NEDD4-binding protein 2-like 2 (574 aa).

Disordered stretches follow at residues 82–110, 127–161, 182–204, and 542–574; these read HKEM…LAPA, YKPP…QKFN, ENEN…QTLS, and TQKS…TDDY. Basic and acidic residues-rich tracts occupy residues 129 to 141 and 149 to 161; these read PPEK…RKNE and DSKR…QKFN. Positions 162–196 form a coiled coil; that stretch reads SKKLEIDTELSQFYKEIEELENENEASQGSCKEPE. Over residues 563–574 the composition is skewed to polar residues; that stretch reads GSHSQVSITDDY.

The polypeptide is NEDD4-binding protein 2-like 2 (N4bp2l2) (Rattus norvegicus (Rat)).